Here is a 261-residue protein sequence, read N- to C-terminus: Cytochrome c oxidase subunit 3 (261 aa).

Topologically, residues 1 to 15 (MAHQAHAYHMVDPSP) are mitochondrial matrix. Residues 16–34 (WPLTGAVAALLLTSGLAVW) form a helical membrane-spanning segment. Over 35–40 (FHFKSL) the chain is Mitochondrial intermembrane. A helical transmembrane segment spans residues 41 to 66 (TLLAMGLLLMILTMIQWWRDIIREGT). Over 67-72 (FQGHHT) the chain is Mitochondrial matrix. The chain crosses the membrane as a helical span at residues 73–105 (PPVQKGLRYGMILFITSEVFFFLGFFWAFYHSS). Residues 106–128 (LAPTPELGGIWPPTGITPLDPFE) are Mitochondrial intermembrane-facing. A helical membrane pass occupies residues 129 to 152 (VPLLNTAVLLASGVTVTWTHHSLM). Topologically, residues 153-155 (EGK) are mitochondrial matrix. A helical transmembrane segment spans residues 156-183 (RTEATQALTLTILLGLYFTALQAMEYYE). Residues 184-190 (APFTIAD) are Mitochondrial intermembrane-facing. The chain crosses the membrane as a helical span at residues 191 to 223 (GVYGTTFFVATGFHGLHVIIGSTFLAGCLLRQI). At 224–232 (LYHFTSSHH) the chain is on the mitochondrial matrix side. A helical transmembrane segment spans residues 233-256 (FGFEAAAWYWHFVDVVWLFLYVSI). The Mitochondrial intermembrane portion of the chain corresponds to 257 to 261 (YWWGS).

Belongs to the cytochrome c oxidase subunit 3 family. As to quaternary structure, component of the cytochrome c oxidase (complex IV, CIV), a multisubunit enzyme composed of 14 subunits. The complex is composed of a catalytic core of 3 subunits MT-CO1, MT-CO2 and MT-CO3, encoded in the mitochondrial DNA, and 11 supernumerary subunits COX4I, COX5A, COX5B, COX6A, COX6B, COX6C, COX7A, COX7B, COX7C, COX8 and NDUFA4, which are encoded in the nuclear genome. The complex exists as a monomer or a dimer and forms supercomplexes (SCs) in the inner mitochondrial membrane with NADH-ubiquinone oxidoreductase (complex I, CI) and ubiquinol-cytochrome c oxidoreductase (cytochrome b-c1 complex, complex III, CIII), resulting in different assemblies (supercomplex SCI(1)III(2)IV(1) and megacomplex MCI(2)III(2)IV(2)).

It is found in the mitochondrion inner membrane. The enzyme catalyses 4 Fe(II)-[cytochrome c] + O2 + 8 H(+)(in) = 4 Fe(III)-[cytochrome c] + 2 H2O + 4 H(+)(out). Functionally, component of the cytochrome c oxidase, the last enzyme in the mitochondrial electron transport chain which drives oxidative phosphorylation. The respiratory chain contains 3 multisubunit complexes succinate dehydrogenase (complex II, CII), ubiquinol-cytochrome c oxidoreductase (cytochrome b-c1 complex, complex III, CIII) and cytochrome c oxidase (complex IV, CIV), that cooperate to transfer electrons derived from NADH and succinate to molecular oxygen, creating an electrochemical gradient over the inner membrane that drives transmembrane transport and the ATP synthase. Cytochrome c oxidase is the component of the respiratory chain that catalyzes the reduction of oxygen to water. Electrons originating from reduced cytochrome c in the intermembrane space (IMS) are transferred via the dinuclear copper A center (CU(A)) of subunit 2 and heme A of subunit 1 to the active site in subunit 1, a binuclear center (BNC) formed by heme A3 and copper B (CU(B)). The BNC reduces molecular oxygen to 2 water molecules using 4 electrons from cytochrome c in the IMS and 4 protons from the mitochondrial matrix. The polypeptide is Cytochrome c oxidase subunit 3 (mt-co3) (Polypterus ornatipinnis (Ornate bichir)).